A 604-amino-acid polypeptide reads, in one-letter code: Aspartate--tRNA(Asp/Asn) ligase (604 aa).

Glu-175 contributes to the L-aspartate binding site. The segment at 199-202 is aspartate; it reads QQFK. The L-aspartate site is built by Arg-221 and His-456. 221-223 is an ATP binding site; the sequence is RDE. Glu-496 is a binding site for ATP. Residue Arg-503 coordinates L-aspartate. Residue 548-551 participates in ATP binding; that stretch reads GVDR.

Belongs to the class-II aminoacyl-tRNA synthetase family. Type 1 subfamily. In terms of assembly, homodimer.

It localises to the cytoplasm. It carries out the reaction tRNA(Asx) + L-aspartate + ATP = L-aspartyl-tRNA(Asx) + AMP + diphosphate. In terms of biological role, aspartyl-tRNA synthetase with relaxed tRNA specificity since it is able to aspartylate not only its cognate tRNA(Asp) but also tRNA(Asn). Reaction proceeds in two steps: L-aspartate is first activated by ATP to form Asp-AMP and then transferred to the acceptor end of tRNA(Asp/Asn). This Methylorubrum populi (strain ATCC BAA-705 / NCIMB 13946 / BJ001) (Methylobacterium populi) protein is Aspartate--tRNA(Asp/Asn) ligase.